We begin with the raw amino-acid sequence, 468 residues long: Aldehyde dehydrogenase family 3 member B1 (468 aa).

N-acetylmethionine is present on Met-1. Position 188–193 (188–193 (GSPRVG)) interacts with NAD(+). Catalysis depends on residues Glu-210 and Cys-244. Residue Cys-463 is the site of S-palmitoyl cysteine attachment. At Cys-465 the chain carries Cysteine methyl ester. Residue Cys-465 is the site of S-geranylgeranyl cysteine attachment. Residues 466 to 468 (TLL) constitute a propeptide, removed in mature form.

This sequence belongs to the aldehyde dehydrogenase family. Post-translationally, dually lipidated in the C-terminus; prenylation occurs prior to, and is a prerequisite for palmitoylation. It is also required for activity towards long-chain substrates. In terms of tissue distribution, highest expression in kidney and lung.

Its subcellular location is the cell membrane. The catalysed reaction is an aldehyde + NADP(+) + H2O = a carboxylate + NADPH + 2 H(+). The enzyme catalyses an aldehyde + NAD(+) + H2O = a carboxylate + NADH + 2 H(+). It catalyses the reaction a long-chain fatty aldehyde + NAD(+) + H2O = a long-chain fatty acid + NADH + 2 H(+). It carries out the reaction a medium-chain fatty aldehyde + NAD(+) + H2O = a medium-chain fatty acid + NADH + 2 H(+). The catalysed reaction is octanal + NAD(+) + H2O = octanoate + NADH + 2 H(+). The enzyme catalyses nonanal + NAD(+) + H2O = nonanoate + NADH + 2 H(+). It catalyses the reaction hexadecanoate + NADH + 2 H(+) = hexadecanal + NAD(+) + H2O. It carries out the reaction (2E)-octenal + NAD(+) + H2O = (2E)-octenoate + NADH + 2 H(+). The catalysed reaction is (E)-non-2-enal + NAD(+) + H2O = (E)-non-2-enoate + NADH + 2 H(+). The enzyme catalyses (E)-4-hydroxynon-2-enal + NAD(+) + H2O = (E)-4-hydroxynon-2-enoate + NADH + 2 H(+). It catalyses the reaction (2E)-hexadecenal + NAD(+) + H2O = (E)-hexadec-2-enoate + NADH + 2 H(+). It carries out the reaction benzaldehyde + NAD(+) + H2O = benzoate + NADH + 2 H(+). The catalysed reaction is a medium-chain fatty aldehyde + NADP(+) + H2O = a medium-chain fatty acid + NADPH + 2 H(+). The enzyme catalyses hexanal + NADP(+) + H2O = hexanoate + NADPH + 2 H(+). It catalyses the reaction octanal + NADP(+) + H2O = octanoate + NADPH + 2 H(+). It carries out the reaction nonanal + NADP(+) + H2O = nonanoate + NADPH + 2 H(+). The catalysed reaction is (2E)-octenal + NADP(+) + H2O = (2E)-octenoate + NADPH + 2 H(+). The enzyme catalyses (E)-non-2-enal + NADP(+) + H2O = (E)-non-2-enoate + NADPH + 2 H(+). It catalyses the reaction (E)-4-hydroxynon-2-enal + NADP(+) + H2O = (E)-4-hydroxynon-2-enoate + NADPH + 2 H(+). It carries out the reaction benzaldehyde + NADP(+) + H2O = benzoate + NADPH + 2 H(+). It functions in the pathway alcohol metabolism; ethanol degradation; acetate from ethanol: step 2/2. In terms of biological role, oxidizes medium and long chain saturated and unsaturated fatty aldehydes generated in the plasma membrane into non-toxic fatty acids. May have a protective role against the cytotoxicity induced by lipid peroxidation. Short-chain fatty aldehydes are not good substrates. Can use both NADP(+) and NAD(+) as electron acceptor in vitro, however in vivo preference will depend on their tissue levels. Low activity towards acetaldehyde and 3,4-dihydroxyphenylacetaldehyde. Able to metabolize aromatic aldehydes such as benzaldehyde to their acid form. The chain is Aldehyde dehydrogenase family 3 member B1 (ALDH3B1) from Homo sapiens (Human).